Consider the following 323-residue polypeptide: Sphingolipid delta(4)-desaturase DES1 (323 aa).

The next 2 helical transmembrane spans lie at 41–61 (YNLI…FYLV) and 68–88 (WVVF…TLAI). The Histidine box-1 signature appears at 89–93 (HEISH). The helical transmembrane segment at 102 to 122 (AMWNRWFGIFANLPLGLPYSI) threads the bilayer. Residues 128–132 (HMDHH) carry the Histidine box-2 motif. The next 3 membrane-spanning stretches (helical) occupy residues 159–179 (KFIW…CINP), 185–205 (LEII…YLWG), and 209–229 (IFYM…SGHF). The short motif at 259-263 (HNEHH) is the Histidine box-3 element.

The protein belongs to the fatty acid desaturase type 1 family. DEGS subfamily. As to quaternary structure, interacts with RLBP1; the interaction increases synthesis of chromophore-precursors by DEGS1. In terms of tissue distribution, expressed in retina and retinal pigment epithelium by Mueller cells (at protein level).

Its subcellular location is the endoplasmic reticulum membrane. It catalyses the reaction an N-acylsphinganine + 2 Fe(II)-[cytochrome b5] + O2 + 2 H(+) = an N-acylsphing-4-enine + 2 Fe(III)-[cytochrome b5] + 2 H2O. The enzyme catalyses all-trans-retinol = 11-cis-retinol. The catalysed reaction is all-trans-retinol = 9-cis-retinol. It carries out the reaction all-trans-retinol = 13-cis-retinol. It catalyses the reaction 11-cis-retinol = 13-cis-retinol. The enzyme catalyses 11-cis-retinol = 9-cis-retinol. Functionally, has sphingolipid-delta-4-desaturase activity. Converts D-erythro-sphinganine to D-erythro-sphingosine (E-sphing-4-enine). Catalyzes the equilibrium isomerization of retinols. The protein is Sphingolipid delta(4)-desaturase DES1 (DEGS1) of Gallus gallus (Chicken).